A 257-amino-acid polypeptide reads, in one-letter code: 3-deoxy-manno-octulosonate cytidylyltransferase (257 aa).

It belongs to the KdsB family.

Its subcellular location is the cytoplasm. The enzyme catalyses 3-deoxy-alpha-D-manno-oct-2-ulosonate + CTP = CMP-3-deoxy-beta-D-manno-octulosonate + diphosphate. Its pathway is nucleotide-sugar biosynthesis; CMP-3-deoxy-D-manno-octulosonate biosynthesis; CMP-3-deoxy-D-manno-octulosonate from 3-deoxy-D-manno-octulosonate and CTP: step 1/1. It functions in the pathway bacterial outer membrane biogenesis; lipopolysaccharide biosynthesis. Functionally, activates KDO (a required 8-carbon sugar) for incorporation into bacterial lipopolysaccharide in Gram-negative bacteria. The sequence is that of 3-deoxy-manno-octulosonate cytidylyltransferase from Albidiferax ferrireducens (strain ATCC BAA-621 / DSM 15236 / T118) (Rhodoferax ferrireducens).